A 187-amino-acid polypeptide reads, in one-letter code: Cell division protein SepF (187 aa).

The interval 21-97 is disordered; that stretch reads EVEVPDKQQQ…ATPNNASQES (77 aa). Composition is skewed to polar residues over residues 38-63 and 70-97; these read EQSQ…YTTT and RMSN…SQES.

It belongs to the SepF family. Homodimer. Interacts with FtsZ.

Its subcellular location is the cytoplasm. Functionally, cell division protein that is part of the divisome complex and is recruited early to the Z-ring. Probably stimulates Z-ring formation, perhaps through the cross-linking of FtsZ protofilaments. Its function overlaps with FtsA. The polypeptide is Cell division protein SepF (Staphylococcus aureus (strain MRSA252)).